We begin with the raw amino-acid sequence, 132 residues long: Small ribosomal subunit protein uS8 (132 aa).

The protein belongs to the universal ribosomal protein uS8 family. Part of the 30S ribosomal subunit. Contacts proteins S5 and S12.

Its function is as follows. One of the primary rRNA binding proteins, it binds directly to 16S rRNA central domain where it helps coordinate assembly of the platform of the 30S subunit. The chain is Small ribosomal subunit protein uS8 from Rhodococcus jostii (strain RHA1).